The following is a 290-amino-acid chain: Phosphonopyruvate hydrolase (290 aa).

40–44 (WGSGF) is a substrate binding site. Residue aspartate 54 is the Nucleophile of the active site. Aspartate 81 serves as a coordination point for Mg(2+). Residues arginine 155, histidine 186, and arginine 188 each contribute to the substrate site.

In terms of assembly, homodimer. Homotetramer. It depends on Co(2+) as a cofactor. Requires Mg(2+) as cofactor. Mn(2+) is required as a cofactor.

It catalyses the reaction 3-phosphonopyruvate + H2O = pyruvate + phosphate + H(+). With respect to regulation, partially inhibited by EDTA. Activity is restored by Co(2+), and to a lesser extent by Ni(2+) and Mg(2+). Unaffected by Cs(2+) and Ca(2+). Activity is reduced by Mn(2+) and Cu(2+). Hydrolyzes phosphonopyruvate. Not active towards phosphoenolpyruvate, glycerophosphate, phospho-L-serine or phosphoglycolic acid. The sequence is that of Phosphonopyruvate hydrolase from Variovorax sp. (strain Pal2).